The following is a 48-amino-acid chain: Cuticle protein 5.1 (48 aa).

Component of the cuticle of migratory locust which contains more than 100 different structural proteins. The chain is Cuticle protein 5.1 from Locusta migratoria (Migratory locust).